The sequence spans 489 residues: Ribulose bisphosphate carboxylase large chain 2 (489 aa).

Substrate-binding residues include Asn128 and Thr178. The active-site Proton acceptor is the Lys180. Residue Lys182 participates in substrate binding. The Mg(2+) site is built by Lys206, Asp208, and Glu209. At Lys206 the chain carries N6-carboxylysine. Residue His298 is the Proton acceptor of the active site. Substrate is bound by residues Arg299, His331, and Ser383.

It belongs to the RuBisCO large chain family. Type I subfamily. In terms of assembly, heterohexadecamer of 8 large chains and 8 small chains. Mg(2+) is required as a cofactor.

It catalyses the reaction 2 (2R)-3-phosphoglycerate + 2 H(+) = D-ribulose 1,5-bisphosphate + CO2 + H2O. It carries out the reaction D-ribulose 1,5-bisphosphate + O2 = 2-phosphoglycolate + (2R)-3-phosphoglycerate + 2 H(+). RuBisCO catalyzes two reactions: the carboxylation of D-ribulose 1,5-bisphosphate, the primary event in carbon dioxide fixation, as well as the oxidative fragmentation of the pentose substrate. Both reactions occur simultaneously and in competition at the same active site. The sequence is that of Ribulose bisphosphate carboxylase large chain 2 from Nitrobacter winogradskyi (strain ATCC 25391 / DSM 10237 / CIP 104748 / NCIMB 11846 / Nb-255).